A 268-amino-acid polypeptide reads, in one-letter code: Tryptophan synthase alpha chain (268 aa).

Active-site proton acceptor residues include glutamate 49 and aspartate 60.

This sequence belongs to the TrpA family. Tetramer of two alpha and two beta chains.

The catalysed reaction is (1S,2R)-1-C-(indol-3-yl)glycerol 3-phosphate + L-serine = D-glyceraldehyde 3-phosphate + L-tryptophan + H2O. Its pathway is amino-acid biosynthesis; L-tryptophan biosynthesis; L-tryptophan from chorismate: step 5/5. In terms of biological role, the alpha subunit is responsible for the aldol cleavage of indoleglycerol phosphate to indole and glyceraldehyde 3-phosphate. The protein is Tryptophan synthase alpha chain of Shigella boydii serotype 4 (strain Sb227).